The following is a 1430-amino-acid chain: ABC transporter eupT (1430 aa).

Residues 1–26 (MAPAIDSTVNDLQPNTPNPEKALSSQ) are disordered. The ABC transporter 1 domain occupies 112–368 (LALPAMIRQL…FVNLGFECPA (257 aa)). N-linked (GlcNAc...) asparagine glycosylation occurs at N292. The next 5 membrane-spanning stretches (helical) occupy residues 476–496 (WPAV…SSLF), 511–531 (VVLF…VMTL), 557–577 (VLVD…VFYF), 586–606 (GNFF…SGVF), and 620–640 (MVPA…VVPV). N-linked (GlcNAc...) asparagine glycosylation occurs at N684. Residues 707–727 (VGIIIAMVIFNYLMYFIASEY) form a helical membrane-spanning segment. The 244-residue stretch at 789 to 1032 (FHWNNVCYDL…TLIDYFERNG (244 aa)) folds into the ABC transporter 2 domain. 825 to 832 (GVSGAGKT) contributes to the ATP binding site. Residue N1019 is glycosylated (N-linked (GlcNAc...) asparagine). Transmembrane regions (helical) follow at residues 1133 to 1153 (ITLC…APLS), 1213 to 1233 (LPWS…PIGF), 1249 to 1269 (LMWL…HMCI), 1278 to 1298 (GGNI…VLAS), 1305 to 1325 (FWIF…VLST), and 1400 to 1420 (FGIL…LYWI).

Belongs to the ABC transporter superfamily. ABCG family. PDR (TC 3.A.1.205) subfamily.

Its subcellular location is the cell membrane. Functionally, ABC transporter; part of the gene cluster that mediates the biosynthesis of eupenifeldin, a bistropolone meroterpenoid that acts as an antitumor agent. The polypeptide is ABC transporter eupT (Phoma sp).